Here is a 115-residue protein sequence, read N- to C-terminus: MKFVLLFGVLLLTLFSYSSAEMLDDFDQADEDELLSLIEKEEARAKECTPRFYDCSHDRHSCCRSELFKDVCTCFYPEGGDNEVCTCQQPKHLKYMEKAADKAKKFGGKIKKWFG.

Residues 1-20 form the signal peptide; that stretch reads MKFVLLFGVLLLTLFSYSSA. The propeptide occupies 21 to 44; it reads EMLDDFDQADEDELLSLIEKEEAR. 4 disulfide bridges follow: cysteine 48–cysteine 63, cysteine 55–cysteine 72, cysteine 62–cysteine 87, and cysteine 74–cysteine 85.

It belongs to the neurotoxin 19 (CSTX) family. 01 subfamily. As to expression, expressed by the venom gland.

It is found in the secreted. The polypeptide is U3-lycotoxin-Ls1a (Lycosa singoriensis (Wolf spider)).